The primary structure comprises 245 residues: tRNA pseudouridine synthase A (245 aa).

The active-site Nucleophile is the Asp-52. Tyr-111 provides a ligand contact to substrate.

It belongs to the tRNA pseudouridine synthase TruA family. Homodimer.

It carries out the reaction uridine(38/39/40) in tRNA = pseudouridine(38/39/40) in tRNA. Formation of pseudouridine at positions 38, 39 and 40 in the anticodon stem and loop of transfer RNAs. The sequence is that of tRNA pseudouridine synthase A from Rickettsia felis (strain ATCC VR-1525 / URRWXCal2) (Rickettsia azadi).